A 541-amino-acid polypeptide reads, in one-letter code: Calcium-dependent protein kinase 9 (541 aa).

The segment at 1 to 75 is disordered; sequence MGNCFAKNHG…PGLSPKTTTK (75 aa). G2 is lipidated: N-myristoyl glycine. The span at 14-54 shows a compositional bias: polar residues; it reads PQQNGNTTRSVEVGVTNQDPPSYTPQARTTQQPEKPGSVNS. S69 carries the phosphoserine modification. Residues 91–349 enclose the Protein kinase domain; the sequence is YTLGKELGRG…AADVLQHPWL (259 aa). ATP contacts are provided by residues 97 to 105 and K120; that span reads LGRGQFGVT. D215 serves as the catalytic Proton acceptor. S255 is subject to Phosphoserine. An autoinhibitory domain region spans residues 355-385; the sequence is ASDKPIDSAVLSRMKQFRAMNKLKKLALKVI. EF-hand domains are found at residues 392–427, 428–463, 464–499, and 500–534; these read EEIQGLKAMFANIDTDNSGTITYEELKEGLAKLGSK, LTEAEVKQLMDAADVDGNGSIDYIEFITATMHRHRL, ESNENLYKAFQHFDKDSSGYITIDELESALKEYGMG, and DDATIKEVLSDVDSDNDGRINYEEFCAMMRSGNPQ. Ca(2+) is bound by residues D405, D407, S409, T411, E416, D441, D443, N445, S447, E452, D477, D479, S481, Y483, E488, D512, D514, D516, R518, and E523.

Belongs to the protein kinase superfamily. Ser/Thr protein kinase family. CDPK subfamily.

The protein localises to the cell membrane. The catalysed reaction is L-seryl-[protein] + ATP = O-phospho-L-seryl-[protein] + ADP + H(+). The enzyme catalyses L-threonyl-[protein] + ATP = O-phospho-L-threonyl-[protein] + ADP + H(+). With respect to regulation, activated by calcium. Autophosphorylation may play an important role in the regulation of the kinase activity. Its function is as follows. May play a role in signal transduction pathways that involve calcium as a second messenger. The polypeptide is Calcium-dependent protein kinase 9 (CPK9) (Arabidopsis thaliana (Mouse-ear cress)).